A 116-amino-acid polypeptide reads, in one-letter code: Large ribosomal subunit protein uL22 (116 aa).

The protein belongs to the universal ribosomal protein uL22 family. In terms of assembly, part of the 50S ribosomal subunit.

This protein binds specifically to 23S rRNA; its binding is stimulated by other ribosomal proteins, e.g. L4, L17, and L20. It is important during the early stages of 50S assembly. It makes multiple contacts with different domains of the 23S rRNA in the assembled 50S subunit and ribosome. Functionally, the globular domain of the protein is located near the polypeptide exit tunnel on the outside of the subunit, while an extended beta-hairpin is found that lines the wall of the exit tunnel in the center of the 70S ribosome. In Wolbachia pipientis subsp. Culex pipiens (strain wPip), this protein is Large ribosomal subunit protein uL22.